A 152-amino-acid polypeptide reads, in one-letter code: Arginine repressor (152 aa).

This sequence belongs to the ArgR family.

It localises to the cytoplasm. It functions in the pathway amino-acid biosynthesis; L-arginine biosynthesis [regulation]. Functionally, regulates arginine biosynthesis genes. This chain is Arginine repressor, found in Lactococcus lactis subsp. lactis (strain IL1403) (Streptococcus lactis).